We begin with the raw amino-acid sequence, 49 residues long: MRVGITLACTECKRRNYISTKNKKNDPDRIELKKYCSFCGRHTVHKETK.

The protein belongs to the bacterial ribosomal protein bL33 family.

The sequence is that of Large ribosomal subunit protein bL33 from Moorella thermoacetica (strain ATCC 39073 / JCM 9320).